The primary structure comprises 173 residues: Alpha-crystallin A chain (173 aa).

An N-acetylmethionine modification is found at Met1. The required for complex formation with BFSP1 and BFSP2 stretch occupies residues 1-63 (MDVTIQHPWF…RTVLDSGISE (63 aa)). Gln6 carries the deamidated glutamine; partial modification. The residue at position 45 (Ser45) is a Phosphoserine. Gln50 is modified (deamidated glutamine; partial). The sHSP domain occupies 52-162 (LFRTVLDSGI…GPSERAIPVS (111 aa)). An N6-acetyllysine mark is found at Lys70 and Lys99. Residues His100, Glu102, and His107 each contribute to the Zn(2+) site. Residues 145–173 (KVASGLDAGPSERAIPVSREEKPSSAPSS) form a disordered region. O-linked (GlcNAc) serine glycosylation is present at Ser162.

It belongs to the small heat shock protein (HSP20) family. In terms of assembly, heteromer composed of three CRYAA and one CRYAB subunits. Zinc coordination is achieved at least by His-100, Glu-102 and His-107. His-100 and Glu-102 come from the same molecule within the oligomer, while His-107 residue is provided by another molecule. Inter-subunit bridging via zinc ions enhances stability, which is crucial as there is no protein turn over in the lens. Can also form homodimers and homotetramers (dimers of dimers) which serve as the building blocks of homooligomers. Part of a complex required for lens intermediate filament formation composed of BFSP1, BFSP2 and CRYAA. In terms of processing, acetylation at Lys-70 may increase chaperone activity. Post-translationally, undergoes age-dependent proteolytical cleavage at the C-terminus.

It localises to the cytoplasm. Its subcellular location is the nucleus. Contributes to the transparency and refractive index of the lens. Acts as a chaperone, preventing aggregation of various proteins under a wide range of stress conditions. Required for the correct formation of lens intermediate filaments as part of a complex composed of BFSP1, BFSP2 and CRYAA. The polypeptide is Alpha-crystallin A chain (CRYAA) (Erinaceus europaeus (Western European hedgehog)).